Reading from the N-terminus, the 454-residue chain is uncharacterized protein (454 aa).

The segment at 422–454 (EWLPPAHLDHGQPRTNSYFHPEKLLHDSDEDDP) is disordered.

The protein belongs to the Rv1128c/1148c/1588c/1702c/1945/3466 family.

This is an uncharacterized protein from Mycobacterium tuberculosis (strain CDC 1551 / Oshkosh).